A 215-amino-acid chain; its full sequence is 7-methyl-GTP pyrophosphatase (215 aa).

The active-site Proton acceptor is the aspartate 79.

The protein belongs to the Maf family. YceF subfamily. It depends on a divalent metal cation as a cofactor.

It localises to the cytoplasm. It carries out the reaction N(7)-methyl-GTP + H2O = N(7)-methyl-GMP + diphosphate + H(+). In terms of biological role, nucleoside triphosphate pyrophosphatase that hydrolyzes 7-methyl-GTP (m(7)GTP). May have a dual role in cell division arrest and in preventing the incorporation of modified nucleotides into cellular nucleic acids. The sequence is that of 7-methyl-GTP pyrophosphatase from Burkholderia mallei (strain ATCC 23344).